Consider the following 729-residue polypeptide: Neurochondrin (729 aa).

Ser-2 is modified (N-acetylserine). At Ser-2 the chain carries Phosphoserine. Residues Cys-3 and Cys-4 are each lipidated (S-palmitoyl cysteine). An Asymmetric dimethylarginine modification is found at Arg-75. At Ser-448 the chain carries Phosphoserine.

The protein belongs to the neurochondrin family. As to quaternary structure, interacts with MCHR1. Interacts with SEMA4C. Interacts with DIAPH1 (via FH3 domain). Interacts with GRM5. In terms of processing, palmitoylated. Palmitoylation by ZDHHC1, ZDHHC3 and ZDHHC11 regulates the association of NCDN with endosome membranes. May also be palmitoylated by ZDHHC7.

The protein resides in the cytoplasm. It localises to the cytosol. The protein localises to the endosome membrane. It is found in the cell projection. Its subcellular location is the dendrite. The protein resides in the postsynapse. In terms of biological role, probably involved in signal transduction, in the nervous system, via increasing cell surface localization of GRM5 and positively regulating its signaling. Required for the spatial learning process. Acts as a negative regulator of Ca(2+)-calmodulin-dependent protein kinase 2 (CaMK2) phosphorylation. May play a role in modulating melanin-concentrating hormone-mediated functions via its interaction with MCHR1 that interferes with G protein-coupled signal transduction. May be involved in bone metabolism. May also be involved in neurite outgrowth. This Bos taurus (Bovine) protein is Neurochondrin (NCDN).